Consider the following 691-residue polypeptide: Dipeptidyl-peptidase 5 (691 aa).

The first 20 residues, 1-20, serve as a signal peptide directing secretion; that stretch reads MKRTILSLLAAVSLAIPVYA. Catalysis depends on charge relay system residues serine 549, aspartate 634, and histidine 666.

Belongs to the peptidase S9C family. Homodimer.

It is found in the periplasm. Its function is as follows. Catalyzes the removal of dipeptides from the N-terminus of oligopeptides. Prefers Ala and hydrophobic residues at the P1 position, and has no preference for P2 residues. Shows the highest dipeptidyl peptidase activity toward the synthetic substrate Lys-Ala-methylcoumaryl-7-amide (Lys-Ala-MCA). Is likely involved in amino acid metabolism and bacterial growth/survival of asaccharolytic P.endodontalis, that utilizes amino acids from extracellular proteinaceous nutrients as energy and carbon sources. The chain is Dipeptidyl-peptidase 5 from Porphyromonas endodontalis (strain ATCC 35406 / DSM 24491 / JCM 8526 / CCUG 16442 / BCRC 14492 / NCTC 13058 / HG 370) (Bacteroides endodontalis).